A 193-amino-acid chain; its full sequence is Acyl carrier protein phosphodiesterase (193 aa).

Belongs to the AcpH family.

The catalysed reaction is holo-[ACP] + H2O = apo-[ACP] + (R)-4'-phosphopantetheine + H(+). Functionally, converts holo-ACP to apo-ACP by hydrolytic cleavage of the phosphopantetheine prosthetic group from ACP. This chain is Acyl carrier protein phosphodiesterase, found in Pectobacterium atrosepticum (strain SCRI 1043 / ATCC BAA-672) (Erwinia carotovora subsp. atroseptica).